A 440-amino-acid chain; its full sequence is Deoxyguanosinetriphosphate triphosphohydrolase-like protein (440 aa).

An HD domain is found at 61–256 (RLIHSLEVSC…MEAADDLCYS (196 aa)).

Belongs to the dGTPase family. Type 3 subfamily.

The chain is Deoxyguanosinetriphosphate triphosphohydrolase-like protein from Synechocystis sp. (strain ATCC 27184 / PCC 6803 / Kazusa).